The following is a 266-amino-acid chain: MPANYQSVPQDDPSVPNLAQAPPAYSEYNESATENPAVDQFKNTTPVAECAKSIRMAFLRKVYAILTAQLFVTSLFGGIFYLHPAFSFWVQMHPWFLILNFFISLVVLFGLIMKPYSYPRNYIFLFLFTALEGLTLGTAITFFSARIILEAVFITLGVFVALTAFTFQSKWDFSRLGGFLYVSLWSLILTPLIFFFVPSTPFIDMAFAGFGTLVFCGYILFDTYNILHRYSPEEFIMSSLMLYLDFINLFIRILQILGMLQNNDNN.

Residues 1-22 are disordered; sequence MPANYQSVPQDDPSVPNLAQAP. The next 7 membrane-spanning stretches (helical) occupy residues 70 to 90, 92 to 112, 123 to 143, 147 to 167, 177 to 197, 201 to 221, and 240 to 260; these read LFVT…SFWV, MHPW…FGLI, IFLF…ITFF, IILE…AFTF, GGFL…FFFV, PFID…YILF, and LMLY…LGML.

The protein belongs to the BI1 family. LFG subfamily.

Its subcellular location is the endoplasmic reticulum membrane. The protein resides in the mitochondrion membrane. It is found in the golgi apparatus membrane. The protein localises to the vacuole membrane. Functionally, links the unfolded protein response and programmed cell death and mediates mitochondrial-dependent apoptosis. Induces cell death and disruption of the mitochondrial transmembrane potential. The polypeptide is Bax inhibitor 1 (bxi1) (Schizosaccharomyces pombe (strain 972 / ATCC 24843) (Fission yeast)).